The following is a 66-amino-acid chain: Protein translocase subunit SecE (66 aa).

The chain crosses the membrane as a helical span at residues 29 to 49 (LVASTLVVVVAVFIFSLTCLV).

It belongs to the SecE/SEC61-gamma family. Component of the Sec protein translocase complex. Heterotrimer consisting of SecY, SecE and SecG subunits. The heterotrimers can form oligomers, although 1 heterotrimer is thought to be able to translocate proteins. Interacts with the ribosome. Interacts with SecDF, and other proteins may be involved. Interacts with SecA.

Its subcellular location is the cell inner membrane. In terms of biological role, essential subunit of the Sec protein translocation channel SecYEG. Clamps together the 2 halves of SecY. May contact the channel plug during translocation. In Rickettsia rickettsii, this protein is Protein translocase subunit SecE.